The primary structure comprises 116 residues: Protein TRACHEARY ELEMENT DIFFERENTIATION-RELATED 6 (116 aa).

Over 1–24 the chain is Extracellular; the sequence is MASTDSVYRPTPTPDHDTTVVVVV. A helical membrane pass occupies residues 25 to 45; it reads FVSLGCVMFLAFLAFVIWFLI. Residues 46 to 116 are Cytoplasmic-facing; sequence KKRSRKHRER…GVGSSVVSRS (71 aa).

As to quaternary structure, interacts with CESA7/IRX3, a subunit of the secondary cell wall (SCW)-related cellulose synthase complex. Expressed preferentially in differentiating vessel elements in seedlings.

The protein resides in the cell membrane. Its subcellular location is the secreted. It localises to the cell wall. In terms of biological role, involved in the secondary cell wall (SCW) formation of vessel elements (e.g. protoxylem and metaxylem), thus promoting tracheary element (TE) differentiation. The protein is Protein TRACHEARY ELEMENT DIFFERENTIATION-RELATED 6 of Arabidopsis thaliana (Mouse-ear cress).